The chain runs to 385 residues: Glycerol-3-phosphate dehydrogenase [NAD(+)] 1 (385 aa).

Residues 29 to 34, phenylalanine 121, lysine 144, and alanine 177 contribute to the NAD(+) site; that span reads GSGNWG. Lysine 144 contributes to the substrate binding site. The active-site Proton acceptor is the lysine 232. Residues arginine 296 and glutamine 325 each contribute to the NAD(+) site. 296–297 provides a ligand contact to substrate; sequence RN. Serine 376 is modified (phosphoserine). Position 382 is a phosphothreonine (threonine 382).

Belongs to the NAD-dependent glycerol-3-phosphate dehydrogenase family.

The protein localises to the cytoplasm. The catalysed reaction is sn-glycerol 3-phosphate + NAD(+) = dihydroxyacetone phosphate + NADH + H(+). The protein is Glycerol-3-phosphate dehydrogenase [NAD(+)] 1 (gpd1) of Schizosaccharomyces pombe (strain 972 / ATCC 24843) (Fission yeast).